A 327-amino-acid polypeptide reads, in one-letter code: Tetraacyldisaccharide 4'-kinase (327 aa).

52 to 59 (TLGGAGKT) provides a ligand contact to ATP.

This sequence belongs to the LpxK family.

It carries out the reaction a lipid A disaccharide + ATP = a lipid IVA + ADP + H(+). It participates in glycolipid biosynthesis; lipid IV(A) biosynthesis; lipid IV(A) from (3R)-3-hydroxytetradecanoyl-[acyl-carrier-protein] and UDP-N-acetyl-alpha-D-glucosamine: step 6/6. Transfers the gamma-phosphate of ATP to the 4'-position of a tetraacyldisaccharide 1-phosphate intermediate (termed DS-1-P) to form tetraacyldisaccharide 1,4'-bis-phosphate (lipid IVA). This Methylorubrum extorquens (strain CM4 / NCIMB 13688) (Methylobacterium extorquens) protein is Tetraacyldisaccharide 4'-kinase.